Reading from the N-terminus, the 456-residue chain is Probable polygalacturonase At3g15720 (456 aa).

A signal peptide spans 1-23 (MKKKTWFLNFSLFFLQIFTSSNA). PbH1 repeat units lie at residues 169–195 (CNYVTISSLRINAPESSPNTDGIDVGA), 196–217 (SSNVVIQDCIIATGDDCIAINS), 219–239 (TSNIHISGIDCGPGHGISIGS), 249–270 (VENVCVQNCNFRGTMNGARIKT), 278–299 (ARMITFNGITLDNVENPIIIDQ), and 314–341 (SSAVEVSKVVFSNFIGTSKSEYGVDFRC). Aspartate 210 acts as the Proton donor in catalysis. Histidine 233 is a catalytic residue.

The protein belongs to the glycosyl hydrolase 28 family.

It localises to the secreted. It is found in the cell wall. The catalysed reaction is (1,4-alpha-D-galacturonosyl)n+m + H2O = (1,4-alpha-D-galacturonosyl)n + (1,4-alpha-D-galacturonosyl)m.. This chain is Probable polygalacturonase At3g15720, found in Arabidopsis thaliana (Mouse-ear cress).